The following is a 766-amino-acid chain: LPS-assembly protein LptD (766 aa).

The signal sequence occupies residues 1–18 (MQIRYFLALSLLPNIVLA).

This sequence belongs to the LptD family. Component of the lipopolysaccharide transport and assembly complex. Interacts with LptE and LptA.

Its subcellular location is the cell outer membrane. In terms of biological role, together with LptE, is involved in the assembly of lipopolysaccharide (LPS) at the surface of the outer membrane. This is LPS-assembly protein LptD from Shewanella frigidimarina (strain NCIMB 400).